A 449-amino-acid chain; its full sequence is uncharacterized protein (449 aa).

Positions 1–13 are enriched in basic residues; sequence MPKAPKTKLHHAP. The disordered stretch occupies residues 1–125; it reads MPKAPKTKLH…SQEEEEYEEL (125 aa). Phosphoserine is present on Ser-22. Positions 73–84 are enriched in polar residues; it reads KPSQISAFISNG. Residue Ser-156 is modified to Phosphoserine.

This sequence belongs to the bystin family.

This is an uncharacterized protein from Schizosaccharomyces pombe (strain 972 / ATCC 24843) (Fission yeast).